The following is an 853-amino-acid chain: DNA mismatch repair protein MutS (853 aa).

Gly-614–Ser-621 is a binding site for ATP.

Belongs to the DNA mismatch repair MutS family.

This protein is involved in the repair of mismatches in DNA. It is possible that it carries out the mismatch recognition step. This protein has a weak ATPase activity. The protein is DNA mismatch repair protein MutS of Shigella flexneri serotype 5b (strain 8401).